The chain runs to 171 residues: S-ribosylhomocysteine lyase (171 aa).

Fe cation contacts are provided by histidine 54, histidine 58, and cysteine 128.

The protein belongs to the LuxS family. As to quaternary structure, homodimer. Fe cation serves as cofactor.

The catalysed reaction is S-(5-deoxy-D-ribos-5-yl)-L-homocysteine = (S)-4,5-dihydroxypentane-2,3-dione + L-homocysteine. In terms of biological role, involved in the synthesis of autoinducer 2 (AI-2) which is secreted by bacteria and is used to communicate both the cell density and the metabolic potential of the environment. The regulation of gene expression in response to changes in cell density is called quorum sensing. Catalyzes the transformation of S-ribosylhomocysteine (RHC) to homocysteine (HC) and 4,5-dihydroxy-2,3-pentadione (DPD). This Salmonella agona (strain SL483) protein is S-ribosylhomocysteine lyase.